The primary structure comprises 348 residues: tRNA N6-adenosine threonylcarbamoyltransferase (348 aa).

The Fe cation site is built by H111 and H115. Residues 134-138 (LISGG), D167, G180, and N277 each bind substrate. D305 is a binding site for Fe cation.

Belongs to the KAE1 / TsaD family. Fe(2+) is required as a cofactor.

The protein resides in the cytoplasm. It carries out the reaction L-threonylcarbamoyladenylate + adenosine(37) in tRNA = N(6)-L-threonylcarbamoyladenosine(37) in tRNA + AMP + H(+). In terms of biological role, required for the formation of a threonylcarbamoyl group on adenosine at position 37 (t(6)A37) in tRNAs that read codons beginning with adenine. Is involved in the transfer of the threonylcarbamoyl moiety of threonylcarbamoyl-AMP (TC-AMP) to the N6 group of A37, together with TsaE and TsaB. TsaD likely plays a direct catalytic role in this reaction. This Haemophilus ducreyi (strain 35000HP / ATCC 700724) protein is tRNA N6-adenosine threonylcarbamoyltransferase.